The primary structure comprises 67 residues: Beta-defensin 110 (67 aa).

The signal sequence occupies residues 1–19 (MKIQLFFFILLFWVTILPA). Intrachain disulfides connect C35/C63, C42/C56, and C46/C64.

It belongs to the beta-defensin family.

It is found in the secreted. In terms of biological role, has antibacterial activity. In Pan troglodytes (Chimpanzee), this protein is Beta-defensin 110 (DEFB110).